The sequence spans 312 residues: Ribosomal RNA small subunit methyltransferase H (312 aa).

Residues 33–35 (AGH), Asp52, Phe79, Asp100, and Gln107 contribute to the S-adenosyl-L-methionine site.

This sequence belongs to the methyltransferase superfamily. RsmH family.

The protein resides in the cytoplasm. The enzyme catalyses cytidine(1402) in 16S rRNA + S-adenosyl-L-methionine = N(4)-methylcytidine(1402) in 16S rRNA + S-adenosyl-L-homocysteine + H(+). Specifically methylates the N4 position of cytidine in position 1402 (C1402) of 16S rRNA. This chain is Ribosomal RNA small subunit methyltransferase H, found in Finegoldia magna (strain ATCC 29328 / DSM 20472 / WAL 2508) (Peptostreptococcus magnus).